The chain runs to 345 residues: Myb/SANT-like DNA-binding domain-containing protein 4 (345 aa).

Residues 4–77 (LKRKRKSNFS…EVKRRYLDWR (74 aa)) enclose the Myb-like domain. K9 participates in a covalent cross-link: Glycyl lysine isopeptide (Lys-Gly) (interchain with G-Cter in SUMO2). The residue at position 106 (S106) is a Phosphoserine. Residues K114 and K142 each participate in a glycyl lysine isopeptide (Lys-Gly) (interchain with G-Cter in SUMO2) cross-link. Residues 143 to 175 (VEEEERDPQSPEFEIEEEEEMLSSVIPDSRREN) are disordered. Residue T188 is modified to Phosphothreonine. Positions 203 to 345 (LLVNIEKQKL…LRIQKEGHLQ (143 aa)) form a coiled coil. Residues K237, K254, and K273 each participate in a glycyl lysine isopeptide (Lys-Gly) (interchain with G-Cter in SUMO2) cross-link.

The chain is Myb/SANT-like DNA-binding domain-containing protein 4 (MSANTD4) from Homo sapiens (Human).